A 347-amino-acid chain; its full sequence is NADH-ubiquinone oxidoreductase chain 2 (347 aa).

11 helical membrane passes run 3–23 (PLIM…VMTG), 25–45 (HWLM…PMLM), 59–79 (YFFT…INLM), 96–116 (IIMT…FWVP), 127–147 (GLIL…MISP), 148–168 (GINL…GGWG), 178–198 (IMAY…IYNP), 201–221 (TLLN…LFMI), 247–267 (TLLS…WMII), 276–296 (IVLP…YMRL), and 325–345 (LLTP…MMMI).

The protein belongs to the complex I subunit 2 family. In terms of assembly, core subunit of respiratory chain NADH dehydrogenase (Complex I) which is composed of 45 different subunits. Interacts with TMEM242.

The protein resides in the mitochondrion inner membrane. The catalysed reaction is a ubiquinone + NADH + 5 H(+)(in) = a ubiquinol + NAD(+) + 4 H(+)(out). In terms of biological role, core subunit of the mitochondrial membrane respiratory chain NADH dehydrogenase (Complex I) which catalyzes electron transfer from NADH through the respiratory chain, using ubiquinone as an electron acceptor. Essential for the catalytic activity and assembly of complex I. This is NADH-ubiquinone oxidoreductase chain 2 from Ozimops beccarii (Beccari's free-tailed bat).